Here is a 319-residue protein sequence, read N- to C-terminus: tRNA U34 carboxymethyltransferase (319 aa).

Residues lysine 88, tryptophan 102, lysine 107, glycine 126, 176–177 (LE), methionine 192, tyrosine 196, and arginine 311 contribute to the carboxy-S-adenosyl-L-methionine site.

This sequence belongs to the class I-like SAM-binding methyltransferase superfamily. CmoB family. In terms of assembly, homotetramer.

It carries out the reaction carboxy-S-adenosyl-L-methionine + 5-hydroxyuridine(34) in tRNA = 5-carboxymethoxyuridine(34) in tRNA + S-adenosyl-L-homocysteine + H(+). Catalyzes carboxymethyl transfer from carboxy-S-adenosyl-L-methionine (Cx-SAM) to 5-hydroxyuridine (ho5U) to form 5-carboxymethoxyuridine (cmo5U) at position 34 in tRNAs. In Pseudomonas syringae pv. tomato (strain ATCC BAA-871 / DC3000), this protein is tRNA U34 carboxymethyltransferase.